Here is a 365-residue protein sequence, read N- to C-terminus: tRNA 2-selenouridine synthase (365 aa).

A Rhodanese domain is found at Phe12–Gln136. Cys95 acts as the S-selanylcysteine intermediate in catalysis.

Belongs to the SelU family. In terms of assembly, monomer.

It carries out the reaction 5-methylaminomethyl-2-thiouridine(34) in tRNA + selenophosphate + (2E)-geranyl diphosphate + H2O + H(+) = 5-methylaminomethyl-2-selenouridine(34) in tRNA + (2E)-thiogeraniol + phosphate + diphosphate. The catalysed reaction is 5-methylaminomethyl-2-thiouridine(34) in tRNA + (2E)-geranyl diphosphate = 5-methylaminomethyl-S-(2E)-geranyl-thiouridine(34) in tRNA + diphosphate. The enzyme catalyses 5-methylaminomethyl-S-(2E)-geranyl-thiouridine(34) in tRNA + selenophosphate + H(+) = 5-methylaminomethyl-2-(Se-phospho)selenouridine(34) in tRNA + (2E)-thiogeraniol. It catalyses the reaction 5-methylaminomethyl-2-(Se-phospho)selenouridine(34) in tRNA + H2O = 5-methylaminomethyl-2-selenouridine(34) in tRNA + phosphate. In terms of biological role, involved in the post-transcriptional modification of the uridine at the wobble position (U34) of tRNA(Lys), tRNA(Glu) and tRNA(Gln). Catalyzes the conversion of 2-thiouridine (S2U-RNA) to 2-selenouridine (Se2U-RNA). Acts in a two-step process involving geranylation of 2-thiouridine (S2U) to S-geranyl-2-thiouridine (geS2U) and subsequent selenation of the latter derivative to 2-selenouridine (Se2U) in the tRNA chain. The protein is tRNA 2-selenouridine synthase of Verminephrobacter eiseniae (strain EF01-2).